Reading from the N-terminus, the 89-residue chain is Small ribosomal subunit protein bS16 (89 aa).

Belongs to the bacterial ribosomal protein bS16 family.

This is Small ribosomal subunit protein bS16 from Geobacillus stearothermophilus (Bacillus stearothermophilus).